A 193-amino-acid chain; its full sequence is Ion-translocating oxidoreductase complex subunit A (193 aa).

The next 6 membrane-spanning stretches (helical) occupy residues 5 to 25 (ALLF…FLGL), 39 to 59 (IGMG…SWLI), 62 to 82 (FILV…LVLA), 102 to 122 (LLGI…VVLL), 134 to 154 (TIYG…FAAI), and 171 to 191 (SIAL…TGLV).

This sequence belongs to the NqrDE/RnfAE family. The complex is composed of six subunits: RnfA, RnfB, RnfC, RnfD, RnfE and RnfG.

Its subcellular location is the cell inner membrane. Its function is as follows. Part of a membrane-bound complex that couples electron transfer with translocation of ions across the membrane. The chain is Ion-translocating oxidoreductase complex subunit A from Pectobacterium atrosepticum (strain SCRI 1043 / ATCC BAA-672) (Erwinia carotovora subsp. atroseptica).